The following is a 209-amino-acid chain: Glycerol-3-phosphate acyltransferase (209 aa).

5 consecutive transmembrane segments (helical) span residues 4–24 (IAIG…AILI), 53–75 (LAAA…IGYG), 80–102 (PFWL…FFHF), 112–132 (LGAI…TWLL), and 138–158 (GYSS…VWWF).

This sequence belongs to the PlsY family. Probably interacts with PlsX.

It localises to the cell inner membrane. It carries out the reaction an acyl phosphate + sn-glycerol 3-phosphate = a 1-acyl-sn-glycero-3-phosphate + phosphate. Its pathway is lipid metabolism; phospholipid metabolism. Its function is as follows. Catalyzes the transfer of an acyl group from acyl-phosphate (acyl-PO(4)) to glycerol-3-phosphate (G3P) to form lysophosphatidic acid (LPA). This enzyme utilizes acyl-phosphate as fatty acyl donor, but not acyl-CoA or acyl-ACP. This chain is Glycerol-3-phosphate acyltransferase, found in Sodalis glossinidius (strain morsitans).